The following is a 231-amino-acid chain: CD302 antigen (231 aa).

An N-terminal signal peptide occupies residues 1–21; the sequence is MSAAVVATLPTLLLLLGLAAA. Over 22 to 169 the chain is Extracellular; the sequence is DCPSSSWVQF…YEKKYLPDHH (148 aa). The region spanning 31–153 is the C-type lectin domain; it reads FQSNCYIFLQ…CEVSSVEGAL (123 aa). N-linked (GlcNAc...) asparagine glycosylation occurs at asparagine 110. Cysteine 129 and cysteine 144 are oxidised to a cystine. The chain crosses the membrane as a helical span at residues 170–190; the sequence is ILITALVIASTTILTITGAVV. Residues 191–231 lie on the Cytoplasmic side of the membrane; sequence WFLYKRNLTSGLTNTAYTTAPQLPYNDDCILVDAEENEYVA.

Its subcellular location is the membrane. It localises to the cell projection. The protein localises to the filopodium. The protein resides in the cytoplasm. It is found in the cell cortex. Its subcellular location is the microvillus. Functionally, potential multifunctional C-type lectin receptor that may play roles in endocytosis and phagocytosis as well as in cell adhesion and migration. The protein is CD302 antigen of Trichosurus vulpecula (Brush-tailed possum).